The chain runs to 326 residues: Tagatose 1,6-diphosphate aldolase (326 aa).

It belongs to the aldolase LacD family.

It carries out the reaction D-tagatofuranose 1,6-bisphosphate = D-glyceraldehyde 3-phosphate + dihydroxyacetone phosphate. It participates in carbohydrate metabolism; D-tagatose 6-phosphate degradation; D-glyceraldehyde 3-phosphate and glycerone phosphate from D-tagatose 6-phosphate: step 2/2. In Staphylococcus aureus (strain MW2), this protein is Tagatose 1,6-diphosphate aldolase.